Here is a 538-residue protein sequence, read N- to C-terminus: uncharacterized protein (538 aa).

Residues 1-17 (MSFSATILFSPPSGSEA) form the signal peptide. The tract at residues 101–131 (RQGKVSIPDEDGESRAHSSPPEEPGPLKESP) is disordered. Residues Lys128 and Lys221 each participate in a glycyl lysine isopeptide (Lys-Gly) (interchain with G-Cter in SUMO2) cross-link. Phosphoserine is present on Ser224. Residues 233 to 253 (RATPETGPENGTKLPPPRPED) form a disordered region. A phosphoserine mark is found at Ser285 and Ser428. The disordered stretch occupies residues 488–523 (LPPELYNPNFQEEEDEGGDENAPGSPSFDQPHKTCC).

It is found in the secreted. This is an uncharacterized protein from Homo sapiens (Human).